Here is a 182-residue protein sequence, read N- to C-terminus: Large ribosomal subunit protein uL16 (182 aa).

Belongs to the universal ribosomal protein uL16 family.

The protein is Large ribosomal subunit protein uL16 of Thermococcus gammatolerans (strain DSM 15229 / JCM 11827 / EJ3).